We begin with the raw amino-acid sequence, 124 residues long: Large ribosomal subunit protein bL12 (124 aa).

It belongs to the bacterial ribosomal protein bL12 family. Homodimer. Part of the ribosomal stalk of the 50S ribosomal subunit. Forms a multimeric L10(L12)X complex, where L10 forms an elongated spine to which 2 to 4 L12 dimers bind in a sequential fashion. Binds GTP-bound translation factors.

Functionally, forms part of the ribosomal stalk which helps the ribosome interact with GTP-bound translation factors. Is thus essential for accurate translation. The sequence is that of Large ribosomal subunit protein bL12 from Nitrosomonas europaea (strain ATCC 19718 / CIP 103999 / KCTC 2705 / NBRC 14298).